Here is a 209-residue protein sequence, read N- to C-terminus: Uridine kinase (209 aa).

12-19 (GGSGSGKT) serves as a coordination point for ATP.

This sequence belongs to the uridine kinase family.

Its subcellular location is the cytoplasm. It catalyses the reaction uridine + ATP = UMP + ADP + H(+). The catalysed reaction is cytidine + ATP = CMP + ADP + H(+). The protein operates within pyrimidine metabolism; CTP biosynthesis via salvage pathway; CTP from cytidine: step 1/3. It participates in pyrimidine metabolism; UMP biosynthesis via salvage pathway; UMP from uridine: step 1/1. In Streptococcus mutans serotype c (strain ATCC 700610 / UA159), this protein is Uridine kinase.